The following is a 126-amino-acid chain: Ribonuclease P protein component (126 aa).

This sequence belongs to the RnpA family. As to quaternary structure, consists of a catalytic RNA component (M1 or rnpB) and a protein subunit.

It carries out the reaction Endonucleolytic cleavage of RNA, removing 5'-extranucleotides from tRNA precursor.. In terms of biological role, RNaseP catalyzes the removal of the 5'-leader sequence from pre-tRNA to produce the mature 5'-terminus. It can also cleave other RNA substrates such as 4.5S RNA. The protein component plays an auxiliary but essential role in vivo by binding to the 5'-leader sequence and broadening the substrate specificity of the ribozyme. The polypeptide is Ribonuclease P protein component (Brevibacillus brevis (strain 47 / JCM 6285 / NBRC 100599)).